The following is a 227-amino-acid chain: Charged multivesicular body protein 4b (227 aa).

Disordered stretches follow at residues 1-26 and 186-227; these read MSGILGKLFGAGAGGKGAGKGPSPQE and SGPE…AGNM. The span at 9-20 shows a compositional bias: gly residues; it reads FGAGAGGKGAGK. A coiled-coil region spans residues 25–185; it reads QEAIQRLRDT…EELDKNLLEI (161 aa).

The protein belongs to the SNF7 family. Probable core component of the endosomal sorting required for transport complex III (ESCRT-III). ESCRT-III components are thought to multimerize to form a flat lattice on the perimeter membrane of the endosome.

It localises to the cytoplasm. The protein localises to the cytosol. The protein resides in the late endosome membrane. It is found in the midbody. In terms of biological role, probable core component of the endosomal sorting required for transport complex III (ESCRT-III) which is involved in multivesicular bodies (MVBs) formation and sorting of endosomal cargo proteins into MVBs. MVBs contain intraluminal vesicles (ILVs) that are generated by invagination and scission from the limiting membrane of the endosome and mostly are delivered to lysosomes enabling degradation of membrane proteins, such as stimulated growth factor receptors, lysosomal enzymes and lipids. The protein is Charged multivesicular body protein 4b (CHMP4B) of Gallus gallus (Chicken).